Reading from the N-terminus, the 176-residue chain is Oxaleimides biosynthesis cluster protein N (176 aa).

4 helical membrane-spanning segments follow: residues 5–25 (LLVV…PLIT), 71–91 (VWTG…LNLF), 104–124 (FLYG…PKML), and 155–175 (FWIV…EGLK).

The protein localises to the membrane. It functions in the pathway secondary metabolite biosynthesis. Its function is as follows. Part of the gene cluster that mediates the biosynthesis of oxaleimides, cytotoxic compounds containing an unusual disubstituted succinimide moiety. The first step of the pathway is provided by the HR-PKS poxF that serves in a new mode of collaborative biosynthesis with the PKS-NRPS poxE, by providing the olefin containing amino acid substrate via the synthesis of an ACP-bound dec-4-enoate. The cytochrome P450 monooxygenase poxM-catalyzed oxidation at the alpha-position creates the enzyme-bound 2-hydroxydec-4-enoyl-ACP thioester, which may be prone to spontaneous hydrolysis to yield 2-hydroxydec-4-enoic acid due to increased electrophilicity of the carbonyl. 2-hydroxydec-4-enoic acid can then be further oxidized by poxM to yield the alpha-ketoacid 2-oxodec-4-enoicacid, which is reductively aminated by the aminotransferase poxL to yield (S,E)-2-aminodec-4-enoic acid. The Hybrid PKS-NRPS synthetase poxE then performs condensation between the octaketide product of its PKS modules and the amino group of (S,E)-2-aminodec-4-enoic acid which is activated and incorporated by the adenylation domain. The resulting aminoacyl product can be cyclized by the Diels-Alderase PoxQ and reductively released by the reductive (R) domain of poxE to yield an aldehyde intermediate. The released aldehyde is then substrate for a Knoevenagel condensation by the hydrolyase poxO followed by an oxidation at the 5-position of the pyrrolidone ring. The presence of the olefin from the amino acid building block allows for migration of the substituted allyl group to occur. This allylic transposition reaction takes place in a conjugate addition, semipinacol-like fashion to yield a succinimide intermediate. Iterative two-electron oxidations of the C7 methyl of the succinimide intermediate to the carboxylic acid can be catalyzed by one of two remaining cytochrome P450 monooxygenasess poxC or poxD to yield oxaleimide A. Subsequent oxidation yields the maleimide scaffold oxaleimide I. Both oxaleimide A and oxaleimide I can undergo oxidative modifications in the decalin ring to yield the series of products oxaleimides B to H. The polypeptide is Oxaleimides biosynthesis cluster protein N (Penicillium oxalicum (strain 114-2 / CGMCC 5302) (Penicillium decumbens)).